The chain runs to 400 residues: MPSFKTLDDLSDIRGKRVLVRVDLNVPVKDGKVTDTTRIERVAPTILELSEKGAKVILLAHFGRPKDGPSPELSLSLIAPSVEEVLDHAVSTASDCIGEAAASAVAAMNDGDILLLENTRFHKGEEKNDPDFTKALAANGDIYVNDAFSAAHRAHASTEGLAHHLPAYAGRTMQAELEALEKGLGDPARPVVAIVGGAKVSTKIDLLMNLVKKVDALVIGGGMANTFIAARGTNVGKSLCEHDLAETARQIMIEAATSGCAIILPEDGVIAREFKAGAANETVDIDAIPADAMVLDVGPKSVQAISAWIERASTLVWNGPLGAFEIEPFDAATVGAAKYAAERTTAGKLTSVAGGGDTVSALNHAGVADDFTYVSTAGGAFLEWMEGKELPGVAVLNAAR.

Substrate-binding positions include 23 to 25 (DLN), Arg38, 61 to 64 (HFGR), Arg120, and Arg153. ATP is bound by residues Lys203, Glu325, and 355 to 358 (GGDT).

It belongs to the phosphoglycerate kinase family. Monomer.

The protein resides in the cytoplasm. The enzyme catalyses (2R)-3-phosphoglycerate + ATP = (2R)-3-phospho-glyceroyl phosphate + ADP. The protein operates within carbohydrate degradation; glycolysis; pyruvate from D-glyceraldehyde 3-phosphate: step 2/5. This is Phosphoglycerate kinase from Rhizobium leguminosarum bv. trifolii (strain WSM2304).